Consider the following 628-residue polypeptide: Biosynthetic arginine decarboxylase (628 aa).

An N6-(pyridoxal phosphate)lysine modification is found at lysine 99. 279-289 is a substrate binding site; the sequence is VDVGGGLGIDY.

This sequence belongs to the Orn/Lys/Arg decarboxylase class-II family. SpeA subfamily. It depends on Mg(2+) as a cofactor. Requires pyridoxal 5'-phosphate as cofactor.

It catalyses the reaction L-arginine + H(+) = agmatine + CO2. The protein operates within amine and polyamine biosynthesis; agmatine biosynthesis; agmatine from L-arginine: step 1/1. Functionally, catalyzes the biosynthesis of agmatine from arginine. The protein is Biosynthetic arginine decarboxylase of Xylella fastidiosa (strain M23).